The sequence spans 164 residues: Transcription factor E (164 aa).

The HTH TFE/IIEalpha-type domain maps to 5–87 (NDKVIRGYLL…LWRLDFSDIE (83 aa)).

The protein belongs to the TFE family. Monomer. Interaction with RNA polymerase subunits RpoF and RpoE is necessary for Tfe stimulatory transcription activity. Able to interact with Tbp and RNA polymerase in the absence of DNA promoter. Interacts both with the preinitiation and elongation complexes.

Its function is as follows. Transcription factor that plays a role in the activation of archaeal genes transcribed by RNA polymerase. Facilitates transcription initiation by enhancing TATA-box recognition by TATA-box-binding protein (Tbp), and transcription factor B (Tfb) and RNA polymerase recruitment. Not absolutely required for transcription in vitro, but particularly important in cases where Tbp or Tfb function is not optimal. It dynamically alters the nucleic acid-binding properties of RNA polymerases by stabilizing the initiation complex and destabilizing elongation complexes. Seems to translocate with the RNA polymerase following initiation and acts by binding to the non template strand of the transcription bubble in elongation complexes. The protein is Transcription factor E of Methanosarcina barkeri (strain Fusaro / DSM 804).